The sequence spans 412 residues: Shaggy-related protein kinase zeta (412 aa).

Pro residues predominate over residues 1–19; the sequence is MTSIPLGPPQPPSLAPQPP. Positions 1-33 are disordered; it reads MTSIPLGPPQPPSLAPQPPHLHGGDSLKRRPDI. Positions 22–33 are enriched in basic and acidic residues; that stretch reads HGGDSLKRRPDI. The residue at position 26 (Ser-26) is a Phosphoserine. The region spanning 72-356 is the Protein kinase domain; sequence YMAERVVGTG…ALEACAHPFF (285 aa). Residues 78-86 and Lys-101 contribute to the ATP site; that span reads VGTGSFGIV. The residue at position 127 (Ser-127) is a Phosphoserine. Phosphothreonine is present on residues Thr-136 and Thr-137. Residue Asp-197 is the Proton acceptor of the active site. Ser-219 carries the phosphoserine modification. Residue Tyr-232 is modified to Phosphotyrosine. At Ser-252 the chain carries Phosphoserine. Thr-293 bears the Phosphothreonine mark. A Phosphoserine modification is found at Ser-342. At Thr-346 the chain carries Phosphothreonine.

This sequence belongs to the protein kinase superfamily. CMGC Ser/Thr protein kinase family. GSK-3 subfamily. Binds to KIB1. Interacts with beet curly top virus AL4/C4 and tomato golden mosaic virus AL4/AC4. In terms of processing, autophosphorylated mainly on threonine and serine residues.

It catalyses the reaction L-seryl-[protein] + ATP = O-phospho-L-seryl-[protein] + ADP + H(+). The enzyme catalyses L-threonyl-[protein] + ATP = O-phospho-L-threonyl-[protein] + ADP + H(+). Its function is as follows. May mediate extracellular signals to regulate transcription in differentiating cells. This is Shaggy-related protein kinase zeta (ASK6) from Arabidopsis thaliana (Mouse-ear cress).